A 158-amino-acid chain; its full sequence is S-ribosylhomocysteine lyase (158 aa).

Histidine 54, histidine 58, and cysteine 124 together coordinate Fe cation.

The protein belongs to the LuxS family. In terms of assembly, homodimer. Fe cation serves as cofactor.

It catalyses the reaction S-(5-deoxy-D-ribos-5-yl)-L-homocysteine = (S)-4,5-dihydroxypentane-2,3-dione + L-homocysteine. Involved in the synthesis of autoinducer 2 (AI-2) which is secreted by bacteria and is used to communicate both the cell density and the metabolic potential of the environment. The regulation of gene expression in response to changes in cell density is called quorum sensing. Catalyzes the transformation of S-ribosylhomocysteine (RHC) to homocysteine (HC) and 4,5-dihydroxy-2,3-pentadione (DPD). In Limosilactobacillus reuteri (strain DSM 20016) (Lactobacillus reuteri), this protein is S-ribosylhomocysteine lyase.